Consider the following 752-residue polypeptide: Cytosolic phospholipase A2 (752 aa).

Residues 1 to 178 are phospholipid binding; that stretch reads MSFIDPYQHI…MKKLLGPKKS (178 aa). Serine 2 carries the phosphoserine modification. A C2 domain is found at 6-122; that stretch reads PYQHIIVEHQ…KVGEKKEVPF (117 aa). Ca(2+) contacts are provided by aspartate 40, threonine 41, aspartate 43, asparagine 65, aspartate 93, alanine 94, and asparagine 95. A PLA2c domain is found at 140–740; it reads SCPDLRFSMA…SNVEARKFFN (601 aa). Serine 228 (nucleophile) is an active-site residue. Threonine 268 carries the post-translational modification Phosphothreonine. A disordered region spans residues 427–457; that stretch reads KHIVSNDSSDSDDEAQGPKGTENEDAEREYQ. Phosphoserine is present on residues serine 434, serine 435, and serine 437. Position 505 is a phosphoserine; by MAPK (serine 505). Phosphoserine is present on residues serine 511 and serine 515. Residue lysine 541 forms a Glycyl lysine isopeptide (Lys-Gly) (interchain with G-Cter in SUMO2) linkage. Aspartate 549 acts as the Proton acceptor in catalysis. Residue lysine 606 forms a Glycyl lysine isopeptide (Lys-Gly) (interchain with G-Cter in SUMO2) linkage. Phosphoserine is present on residues serine 727 and serine 729.

Interacts with KAT5. Post-translationally, phosphorylated at both Ser-505 and Ser-727 in response to mitogenic stimuli. In terms of tissue distribution, in brain tissue, expressed in low levels in olfactory mitral and granule cells, in hippocampal pyramidal cells and in dentate and cerebellar granule cells.

The protein resides in the cytoplasm. The protein localises to the golgi apparatus membrane. It localises to the nucleus envelope. The enzyme catalyses a 1,2-diacyl-sn-glycero-3-phosphocholine + H2O = a 1-acyl-sn-glycero-3-phosphocholine + a fatty acid + H(+). It catalyses the reaction a 1-O-alkyl-2-acyl-sn-glycero-3-phosphocholine + H2O = a 1-O-alkyl-sn-glycero-3-phosphocholine + a fatty acid + H(+). It carries out the reaction a 1-acyl-sn-glycero-3-phosphocholine + H2O = sn-glycerol 3-phosphocholine + a fatty acid + H(+). The catalysed reaction is 1-hexadecanoyl-2-(5Z,8Z,11Z,14Z-eicosatetraenoyl)-sn-glycero-3-phosphocholine + H2O = 1-hexadecanoyl-sn-glycero-3-phosphocholine + (5Z,8Z,11Z,14Z)-eicosatetraenoate + H(+). The enzyme catalyses 1,2-di-(5Z,8Z,11Z,14Z-eicosatetraenoyl)-sn-glycero-3-phosphocholine + H2O = 1-(5Z,8Z,11Z,14Z-eicosatetraenoyl)-sn-glycero-3-phosphocholine + (5Z,8Z,11Z,14Z)-eicosatetraenoate + H(+). It catalyses the reaction 1-octadecanoyl-2-(5Z,8Z,11Z,14Z-eicosatetraenoyl)-sn-glycero-3-phosphocholine + H2O = 1-octadecanoyl-sn-glycero-3-phosphocholine + (5Z,8Z,11Z,14Z)-eicosatetraenoate + H(+). It carries out the reaction 1-hexadecanoyl-2-(9Z,12Z-octadecadienoyl)-sn-glycero-3-phosphocholine + H2O = (9Z,12Z)-octadecadienoate + 1-hexadecanoyl-sn-glycero-3-phosphocholine + H(+). The catalysed reaction is 1-octadecanoyl-2-(9Z,12Z,15Z-octadecatrienoyl)-sn-glycero-3-phosphocholine + H2O = (9Z,12Z,15Z)-octadecatrienoate + 1-octadecanoyl-sn-glycero-3-phosphocholine + H(+). The enzyme catalyses 1-(5Z,8Z,11Z,14Z-eicosatetraenoyl)-2-hexadecanoyl-sn-glycero-3-phosphocholine + H2O = 1-(5Z,8Z,11Z,14Z-eicosatetraenoyl)-sn-glycero-3-phosphocholine + hexadecanoate + H(+). It catalyses the reaction 1-O-hexadecyl-2-(5Z,8Z,11Z,14Z)-eicosatetraenoyl-sn-glycero-3-phosphocholine + H2O = 1-O-hexadecyl-sn-glycero-3-phosphocholine + (5Z,8Z,11Z,14Z)-eicosatetraenoate + H(+). It carries out the reaction 1,2-di-(9Z-octadecenoyl)-sn-glycero-3-phospho-(1'-sn-glycerol) + H2O = 1-(9Z-octadecenoyl)-sn-glycero-3-phospho-(1'-sn-glycerol) + (9Z)-octadecenoate + H(+). The catalysed reaction is 1-octadecanoyl-2-(5Z,8Z,11Z,14Z-eicosatetraenoyl)-sn-glycero-3-phosphate + H2O = 1-octadecanoyl-sn-glycero-3-phosphate + (5Z,8Z,11Z,14Z)-eicosatetraenoate + H(+). The enzyme catalyses 1-hexadecanoyl-sn-glycero-3-phosphocholine + H2O = sn-glycerol 3-phosphocholine + hexadecanoate + H(+). It catalyses the reaction 2-(prostaglandin E2)-sn-glycero-3-phosphoethanolamine + H2O = sn-glycero-3-phosphoethanolamine + prostaglandin E2 + H(+). It carries out the reaction 2-[(15S)-hydroxy-(5Z,8Z,11Z,13E)-eicosatetraenoyl]-sn-glycero-3-phosphocholine + H2O = (15S)-hydroxy-(5Z,8Z,11Z,13E)-eicosatetraenoate + sn-glycerol 3-phosphocholine + H(+). The catalysed reaction is 2-[(15R)-hydroxy-(5Z,8Z,11Z,13E)-eicosatetraenoyl]-sn-glycero-3-phosphocholine + H2O = (15R)-hydroxy-(5Z,8Z,11Z,13E)-eicosatetraenoate + sn-glycerol 3-phosphocholine + H(+). The enzyme catalyses 2-(prostaglandin E2)-sn-glycero-3-phosphocholine + H2O = prostaglandin E2 + sn-glycerol 3-phosphocholine + H(+). It catalyses the reaction 2-[(11R)-hydroxy-(5Z,8Z,12E,14Z)-eicosatetraenoyl]-sn-glycero-3-phosphocholine + H2O = (11R)-hydroxy-(5Z,8Z,12E,14Z)-eicosatetraenoate + sn-glycerol 3-phosphocholine + H(+). It carries out the reaction 1-(5Z,8Z,11Z,14Z-eicosatetraenoyl)-2-O-hexadecyl-sn-glycero-3-phosphocholine + H2O = 2-O-hexadecyl-sn-glycero-3-phosphocholine + (5Z,8Z,11Z,14Z)-eicosatetraenoate + H(+). The catalysed reaction is 1-octadecanoyl-2-(5Z,8Z,11Z,14Z-eicosatetraenoyl)-sn-glycero-3-phosphocholine + glycerol = 1-(5Z,8Z,11Z,14Z-eicosatetraenoyl)-glycerol + 1-octadecanoyl-sn-glycero-3-phosphocholine. The enzyme catalyses 1-octadecanoyl-2-(9Z,12Z,15Z-octadecatrienoyl)-sn-glycero-3-phosphocholine + glycerol = 1-(9Z,12Z,15Z-octadecatrienoyl)-glycerol + 1-octadecanoyl-sn-glycero-3-phosphocholine. Its pathway is lipid metabolism; arachidonate metabolism. It functions in the pathway membrane lipid metabolism; glycerophospholipid metabolism. The protein operates within lipid metabolism; prostaglandin biosynthesis. It participates in lipid metabolism; leukotriene B4 biosynthesis. Activated by cytosolic calcium, which is necessary for binding to membrane lipids. Activated by phosphorylation in response to mitogenic stimuli. In terms of biological role, has primarily calcium-dependent phospholipase and lysophospholipase activities, with a major role in membrane lipid remodeling and biosynthesis of lipid mediators of the inflammatory response. Plays an important role in embryo implantation and parturition through its ability to trigger prostanoid production. Preferentially hydrolyzes the ester bond of the fatty acyl group attached at sn-2 position of phospholipids (phospholipase A2 activity). Selectively hydrolyzes sn-2 arachidonoyl group from membrane phospholipids, providing the precursor for eicosanoid biosynthesis via the cyclooxygenase pathway. In an alternative pathway of eicosanoid biosynthesis, hydrolyzes sn-2 fatty acyl chain of eicosanoid lysophopholipids to release free bioactive eicosanoids. Hydrolyzes the ester bond of the fatty acyl group attached at sn-1 position of phospholipids (phospholipase A1 activity) only if an ether linkage rather than an ester linkage is present at the sn-2 position. This hydrolysis is not stereospecific. Has calcium-independent phospholipase A2 and lysophospholipase activities in the presence of phosphoinositides. Has O-acyltransferase activity. Catalyzes the transfer of fatty acyl chains from phospholipids to a primary hydroxyl group of glycerol (sn-1 or sn-3), potentially contributing to monoacylglycerol synthesis. This chain is Cytosolic phospholipase A2 (Pla2g4a), found in Rattus norvegicus (Rat).